We begin with the raw amino-acid sequence, 496 residues long: WD repeat-containing protein 37 (496 aa).

Composition is skewed to polar residues over residues Met-1–Gln-13 and Ser-22–Ser-31. Residues Met-1 to Leu-50 form a disordered region. Over residues Glu-32 to Asp-47 the composition is skewed to basic and acidic residues. WD repeat units follow at residues Gly-154–Lys-194 and Gly-197–Gln-236. A disordered region spans residues Val-238–Ser-267. Residues Gly-247 to Val-265 are compositionally biased toward acidic residues. WD repeat units follow at residues Ser-281–Ser-320, Gly-323–Val-362, Gly-367–Ala-405, Arg-408–Leu-447, and Gly-454–Glu-495.

Forms homodimers. Interacts with PACS1. Interacts with PACS2.

The protein localises to the cytoplasm. It is found in the nucleus. Required for normal ER Ca2+ handling in lymphocytes. Together with PACS1, it plays an essential role in stabilizing peripheral lymphocyte populations. The polypeptide is WD repeat-containing protein 37 (Wdr37) (Mus musculus (Mouse)).